Here is a 333-residue protein sequence, read N- to C-terminus: Abequosyltransferase RfbV (333 aa).

This sequence belongs to the glycosyltransferase 2 family.

The catalysed reaction is CDP-alpha-D-abequose + alpha-D-Man-(1-&gt;4)-alpha-L-Rha-(1-&gt;3)-alpha-D-Gal-di-trans,octa-cis-undecaprenyl diphosphate = alpha-D-Abe-(1-&gt;3)-alpha-D-Man-(1-&gt;4)-alpha-L-Rha-(1-&gt;3)-alpha-D-Gal-di-trans,octa-cis-undecaprenyl diphosphate + CDP + H(+). The protein operates within bacterial outer membrane biogenesis; LPS O-antigen biosynthesis. Functionally, catalyzes the transfer of CDP-abequose on D-mannosyl-L-rhamnosyl-D-galactose-1-diphospholipid to yield D-abequosyl-D-mannosyl-rhamnosyl-D-galactose-1-diphospholipid. The protein is Abequosyltransferase RfbV (rfbV) of Salmonella typhimurium (strain LT2 / SGSC1412 / ATCC 700720).